Reading from the N-terminus, the 128-residue chain is Phosphoribosyl-AMP cyclohydrolase (128 aa).

A Mg(2+)-binding site is contributed by aspartate 77. A Zn(2+)-binding site is contributed by cysteine 78. Positions 79 and 81 each coordinate Mg(2+). Zn(2+)-binding residues include cysteine 95 and cysteine 102.

Belongs to the PRA-CH family. As to quaternary structure, homodimer. It depends on Mg(2+) as a cofactor. Zn(2+) serves as cofactor.

It is found in the cytoplasm. It carries out the reaction 1-(5-phospho-beta-D-ribosyl)-5'-AMP + H2O = 1-(5-phospho-beta-D-ribosyl)-5-[(5-phospho-beta-D-ribosylamino)methylideneamino]imidazole-4-carboxamide. The protein operates within amino-acid biosynthesis; L-histidine biosynthesis; L-histidine from 5-phospho-alpha-D-ribose 1-diphosphate: step 3/9. Functionally, catalyzes the hydrolysis of the adenine ring of phosphoribosyl-AMP. This Methylococcus capsulatus (strain ATCC 33009 / NCIMB 11132 / Bath) protein is Phosphoribosyl-AMP cyclohydrolase.